The sequence spans 324 residues: MHGSLLKLALLSFSLASSAAVLPRDTGRTSAPSGCSTVGTSGDYSTIGDALTALGSSTADACIYIAAGTYEEQLVINYAGHLTLYGETTDTQTYKQNTVTITHTISSPEAGSLDNSATVNIKSDLVSVYNINIANGYGSGAQAVALVANADQLGFYACQFTGYQDTLYAKAGHQYYINSRIEGAVDYIFGDASAWFENCDIVSNGAGYITAMSRETTSDTAWYAIDHCNIKAASGVDLTGDVYLGRPWRVLARVIYQYSVLPDIINAKGWHSMADGATPLYYEFNNTGAGSDTSDREYLSTIDAPVAKETVLGDDYKNWVDSSY.

The first 19 residues, 1–19 (MHGSLLKLALLSFSLASSA), serve as a signal peptide directing secretion. Position 142 (Gln-142) interacts with substrate. The active-site Proton donor is the Asp-165. Asp-186 functions as the Nucleophile in the catalytic mechanism. Arg-246 and Trp-248 together coordinate substrate. A glycan (N-linked (GlcNAc...) asparagine) is linked at Asn-285.

It belongs to the pectinesterase family.

The protein resides in the secreted. The enzyme catalyses [(1-&gt;4)-alpha-D-galacturonosyl methyl ester](n) + n H2O = [(1-&gt;4)-alpha-D-galacturonosyl](n) + n methanol + n H(+). The protein operates within glycan metabolism; pectin degradation; 2-dehydro-3-deoxy-D-gluconate from pectin: step 1/5. Functionally, involved in maceration and soft-rotting of plant tissue. The polypeptide is Probable pectinesterase A (pmeA) (Aspergillus flavus (strain ATCC 200026 / FGSC A1120 / IAM 13836 / NRRL 3357 / JCM 12722 / SRRC 167)).